The chain runs to 334 residues: Tryptophan--tRNA ligase (334 aa).

ATP-binding positions include 11-13 (QPT) and 19-20 (GN). The 'HIGH' region motif lies at 12 to 20 (PTGKLTIGN). Asp-135 contributes to the L-tryptophan binding site. ATP contacts are provided by residues 147–149 (GED), Ile-186, and 195–199 (KMSKS). Residues 195 to 199 (KMSKS) carry the 'KMSKS' region motif.

It belongs to the class-I aminoacyl-tRNA synthetase family. In terms of assembly, homodimer.

It localises to the cytoplasm. It catalyses the reaction tRNA(Trp) + L-tryptophan + ATP = L-tryptophyl-tRNA(Trp) + AMP + diphosphate + H(+). Catalyzes the attachment of tryptophan to tRNA(Trp). The polypeptide is Tryptophan--tRNA ligase (Blochmanniella floridana).